The chain runs to 650 residues: Chaperone protein HtpG (650 aa).

The a; substrate-binding stretch occupies residues 1–356 (MSTRVETLEF…THDLSLNISR (356 aa)). The segment at 222-245 (AKDRDSNDDGTAESGAGAENAGDR) is disordered. The interval 357-572 (EILQQDRRIQ…TFDMTPALEK (216 aa)) is b. The c stretch occupies residues 573-650 (MYRAMGHEMP…LLAERLAEAL (78 aa)).

This sequence belongs to the heat shock protein 90 family. As to quaternary structure, homodimer.

The protein resides in the cytoplasm. Functionally, molecular chaperone. Has ATPase activity. This is Chaperone protein HtpG from Frankia casuarinae (strain DSM 45818 / CECT 9043 / HFP020203 / CcI3).